The chain runs to 163 residues: GPI-anchored protein LLG2 (163 aa).

Residues 1–23 (MEISPYCLLSLLPIFLLSGFSLS) form the signal peptide. Asn-52 is a glycosylation site (N-linked (GlcNAc...) asparagine). Residue Ser-135 is the site of GPI-anchor amidated serine attachment. Positions 136–163 (DSIPRASTTASLAVLSTFLVLCLLFLSS) are cleaved as a propeptide — removed in mature form.

As to expression, expressed in pollen, pollen tubes, sporophytic pistil tissues, in the early stages of female gametophyte development, and in unfertilized, mature ovules.

The protein resides in the cell membrane. In Arabidopsis thaliana (Mouse-ear cress), this protein is GPI-anchored protein LLG2.